A 430-amino-acid polypeptide reads, in one-letter code: Aspartate aminotransferase, mitochondrial (430 aa).

A mitochondrion-targeting transit peptide spans 1-29 (MALLHSGRALPGIAAAFHPGLAAAASARA). Phosphothreonine is present on T48. K59 is subject to N6-acetyllysine. Substrate is bound at residue G65. At K73 the chain carries N6-acetyllysine; alternate. N6-succinyllysine; alternate is present on K73. An N6-acetyllysine modification is found at K82. K90 bears the N6-acetyllysine; alternate mark. K90 is subject to N6-succinyllysine; alternate. Residue Y96 is modified to 3'-nitrotyrosine; alternate. Y96 bears the Phosphotyrosine; alternate mark. N6-acetyllysine; alternate is present on residues K107 and K122. N6-succinyllysine; alternate is present on residues K107 and K122. S143 bears the Phosphoserine mark. K159 carries the post-translational modification N6-acetyllysine; alternate. K159 is modified (N6-succinyllysine; alternate). W162 is a binding site for substrate. K185 carries the N6-acetyllysine; alternate modification. K185 is subject to N6-succinyllysine; alternate. Position 215 (N215) interacts with substrate. N6-succinyllysine is present on K227. N6-acetyllysine is present on K234. An N6-acetyllysine; alternate mark is found at K279 and K296. K279 is subject to N6-(pyridoxal phosphate)lysine; alternate. Position 296 is an N6-succinyllysine; alternate (K296). Residue K302 is modified to N6-acetyllysine. K309 is subject to N6-acetyllysine; alternate. N6-succinyllysine; alternate is present on K309. R313 is subject to Asymmetric dimethylarginine. T333 is modified (phosphothreonine). The residue at position 338 (K338) is an N6-acetyllysine; alternate. K338 is subject to N6-succinyllysine; alternate. K345 bears the N6-acetyllysine mark. Position 363 is an N6-acetyllysine; alternate (K363). K363 carries the N6-succinyllysine; alternate modification. N6-acetyllysine occurs at positions 364 and 387. N6-acetyllysine; alternate occurs at positions 396 and 404. Residues K396 and K404 each carry the N6-succinyllysine; alternate modification. Substrate is bound at residue R407.

Belongs to the class-I pyridoxal-phosphate-dependent aminotransferase family. Homodimer. The cofactor is pyridoxal 5'-phosphate.

It localises to the mitochondrion matrix. The protein localises to the cell membrane. The enzyme catalyses L-aspartate + 2-oxoglutarate = oxaloacetate + L-glutamate. It catalyses the reaction L-kynurenine + 2-oxoglutarate = kynurenate + L-glutamate + H2O. Functionally, catalyzes the irreversible transamination of the L-tryptophan metabolite L-kynurenine to form kynurenic acid (KA). As a member of the malate-aspartate shuttle, it has a key role in the intracellular NAD(H) redox balance. Is important for metabolite exchange between mitochondria and cytosol, and for amino acid metabolism. Facilitates cellular uptake of long-chain free fatty acids. This Pongo abelii (Sumatran orangutan) protein is Aspartate aminotransferase, mitochondrial (GOT2).